The chain runs to 114 residues: Fumarate reductase subunit D (114 aa).

A run of 3 helical transmembrane segments spans residues 24 to 44 (VSAIFLPVVILIIGLLLPFGL), 50 to 70 (LITFAYSWIGKLVILVLTIFP), and 92 to 112 (GGFIFYGLATIYTVWVLFAVI).

Belongs to the FrdD family. Part of an enzyme complex containing four subunits: a flavoprotein (FrdA), an iron-sulfur protein (FrdB), and two hydrophobic anchor proteins (FrdC and FrdD).

It is found in the cell inner membrane. Anchors the catalytic components of the fumarate reductase complex to the cell membrane, binds quinones. The polypeptide is Fumarate reductase subunit D (Haemophilus influenzae (strain ATCC 51907 / DSM 11121 / KW20 / Rd)).